A 1838-amino-acid polypeptide reads, in one-letter code: Lysine-specific demethylase 5 (1838 aa).

A disordered region spans residues 1–150; that stretch reads MSAKTEADNT…SSNKFDQGKN (150 aa). Gly residues predominate over residues 15–31; the sequence is SGGGGVGSGTSSGGGAS. Residues 45–56 show a composition bias toward low complexity; it reads RNSTGNGTNSGS. The span at 136–145 shows a compositional bias: polar residues; that stretch reads HTQPHSSNKF. The 42-residue stretch at 161 to 202 folds into the JmjN domain; sequence CPVFRPTTEEFKNPLAYISKIRSIAEKCGIAKILPPATWSPP. The 91-residue stretch at 226–316 folds into the ARID domain; that stretch reads TRVKLNFLDQ…ILHPFEVYTS (91 aa). The segment covering 321-333 has biased composition (low complexity); the sequence is GPTPTSSGSGSTP. Disordered stretches follow at residues 321 to 380 and 416 to 437; these read GPTP…GLSG and GSPLATGTTANTRGASQKKGGE. T323 bears the Phosphothreonine mark. 3 stretches are compositionally biased toward polar residues: residues 351 to 361, 369 to 380, and 416 to 430; these read TRQQIAPPNET, FGNSNASCGLSG, and GSPLATGTTANTRGA. The PHD-type 1 zinc-finger motif lies at 448–498; sequence KYICHICNRGDVEESMLLCDGCDDSYHTFCLLPPLTSIPKGEWLCPRCVVE. Positions 591 to 757 constitute a JmjC domain; it reads EYAESSWNLN…MGRECVNHYS (167 aa). Residues H637, D640, and H725 each contribute to the Fe cation site. Residues 960 to 1049 adopt a coiled-coil conformation; it reads VRTRSDHNQE…LRIELQQLDL (90 aa). A PHD-type 2 zinc finger spans residues 1293–1354; the sequence is DMFCLCKSEF…KWLCPSCVRS (62 aa). The segment at 1401 to 1462 is disordered; that stretch reads SSPDVSAAQE…SDADDDDDED (62 aa). Over residues 1407–1417 the composition is skewed to low complexity; that stretch reads AAQEAIMAQQQ. 2 positions are modified to phosphoserine: S1422 and S1433. The segment covering 1453-1462 has biased composition (acidic residues); it reads SDADDDDDED. S1474 is subject to Phosphoserine. The disordered stretch occupies residues 1548–1751; the sequence is YMQRQRQQHT…QRSQQAAQED (204 aa). Low complexity-rich tracts occupy residues 1576–1595, 1624–1650, 1658–1667, 1674–1683, and 1692–1736; these read NSPNSNSNSGGATGSASNSG, GKKGSAAAARKSDAKASPAASTTPGAD, ANGGNTNSST, SATTTPTPGS, and STTA…ATGG. A phosphoserine mark is found at S1635 and S1640. The PHD-type 3 zinc finger occupies 1753–1808; sequence EEECRAENCHKPTGREVDWVQCDGGCNEWFHMYCVGLNRSQIKPDDDYICIRCTKT. The tract at residues 1814–1838 is disordered; that stretch reads QGSGHSMSVASTTTPGKQRAVQSAR.

Belongs to the JARID1 histone demethylase family. As to quaternary structure, interacts with Myc. Part of a complex containing Lid, Myc and Ash2. Fe(2+) serves as cofactor.

Its subcellular location is the nucleus. It carries out the reaction N(6),N(6),N(6)-trimethyl-L-lysyl(4)-[histone H3] + 3 2-oxoglutarate + 3 O2 = L-lysyl(4)-[histone H3] + 3 formaldehyde + 3 succinate + 3 CO2. Inhibited by Myc. Its function is as follows. Histone demethylase that specifically demethylates 'Lys-4' of histone H3, thereby playing a central role in histone code. Does not demethylate histone H3 'Lys-9', H3 'Lys-27', H3 'Lys-36', H3 'Lys-79' or H4 'Lys-20'. Specifically demethylates trimethylated H3 'Lys-4'. Required for the correct regulation of homeotic genes during development. Plays a role in the regulation of the circadian rhythm and in maintaining the normal periodicity of the circadian clock. Regulates the expression of clock-controlled genes including tim, per and cry. The protein is Lysine-specific demethylase 5 of Drosophila melanogaster (Fruit fly).